Consider the following 1004-residue polypeptide: Sal-like protein 2 (1004 aa).

5 disordered regions span residues 1 to 33, 51 to 122, 137 to 177, 220 to 270, and 285 to 307; these read MSRR…EDHP, AHQN…EESS, GGGL…SGHL, PASP…EPPK, and PFSV…ALPG. The segment at 34–56 adopts a C2H2-type 1; atypical zinc-finger fold; that stretch reads QVCAKCCAQFSDPTEFLAHQNSC. The span at 71–81 shows a compositional bias: low complexity; it reads NPSNSSASSAP. Positions 83–98 are enriched in basic and acidic residues; that stretch reads PEGHSRSQVMDTEHSN. A compositionally biased stretch (low complexity) spans 99-110; the sequence is PPDSGSSGAPDP. Pro residues predominate over residues 151-171; the sequence is PLPPESTPAPPPPPPPPPPPG. Ser243 is modified (phosphoserine). 5 consecutive C2H2-type zinc fingers follow at residues 372 to 394, 400 to 422, 629 to 651, 657 to 679, and 689 to 711; these read HKCR…LRSH, YKCN…FHRH, NQCV…YGQH, FKCK…FVGH, and NSCP…VRMH. The tract at residues 712–910 is disordered; it reads LGGQIPNGGS…PGESSGRKAC (199 aa). Over residues 731 to 742 the composition is skewed to polar residues; that stretch reads QENSSEQSTASG. Positions 756 to 779 are enriched in acidic residues; the sequence is PEEEMSEEEEEDEEEEEDVTDEDS. 3 positions are modified to phosphoserine: Ser794, Ser799, and Ser803. A compositionally biased stretch (acidic residues) spans 800 to 809; it reads EEVSGAEEEV. The segment covering 810–819 has biased composition (low complexity); that stretch reads ATSVAAPTTV. The span at 820 to 829 shows a compositional bias: basic and acidic residues; the sequence is KEMDSNEKAP. The segment covering 832-841 has biased composition (pro residues); the sequence is TLPPPPPPPD. Over residues 896–910 the composition is skewed to basic and acidic residues; the sequence is AMKKDPGESSGRKAC. Lys908 participates in a covalent cross-link: Glycyl lysine isopeptide (Lys-Gly) (interchain with G-Cter in ubiquitin). 2 consecutive C2H2-type zinc fingers follow at residues 908 to 930 and 937 to 961; these read KACE…QKTH and FTCV…LAHH.

It belongs to the sal C2H2-type zinc-finger protein family. In terms of tissue distribution, expressed throughout embryonic development. In adult predominantly in brain.

Its subcellular location is the nucleus. Probable transcription factor that plays a role in eye development before, during, and after optic fissure closure. The sequence is that of Sal-like protein 2 (Sall2) from Mus musculus (Mouse).